We begin with the raw amino-acid sequence, 247 residues long: DNA polymerase sliding clamp (247 aa).

The protein belongs to the PCNA family. In terms of assembly, homotrimer. The subunits circularize to form a toroid; DNA passes through its center. Replication factor C (RFC) is required to load the toroid on the DNA.

Sliding clamp subunit that acts as a moving platform for DNA processing. Responsible for tethering the catalytic subunit of DNA polymerase and other proteins to DNA during high-speed replication. The chain is DNA polymerase sliding clamp from Natronomonas pharaonis (strain ATCC 35678 / DSM 2160 / CIP 103997 / JCM 8858 / NBRC 14720 / NCIMB 2260 / Gabara) (Halobacterium pharaonis).